The primary structure comprises 346 residues: uncharacterized protein (346 aa).

This sequence belongs to the Gfo/Idh/MocA family.

This is an uncharacterized protein from Escherichia coli (strain K12).